A 240-amino-acid chain; its full sequence is Ubiquitin domain-containing protein 2 (240 aa).

The segment at methionine 1–glycine 48 is disordered. Residues serine 12–glycine 21 are compositionally biased toward polar residues. Over residues leucine 32–serine 41 the composition is skewed to basic and acidic residues. The Ubiquitin-like domain maps to cysteine 152 to threonine 227.

Its subcellular location is the cytoplasm. This Danio rerio (Zebrafish) protein is Ubiquitin domain-containing protein 2 (ubtd2).